Here is a 174-residue protein sequence, read N- to C-terminus: Flavodoxin (174 aa).

The 163-residue stretch at 4–166 (IGIFFGSDTG…RIIQWTKKIK (163 aa)) folds into the Flavodoxin-like domain.

The protein belongs to the flavodoxin family. It depends on FMN as a cofactor.

Its function is as follows. Low-potential electron donor to a number of redox enzymes. The protein is Flavodoxin (fldA) of Buchnera aphidicola subsp. Baizongia pistaciae (strain Bp).